The primary structure comprises 422 residues: Enolase (422 aa).

Q161 serves as a coordination point for (2R)-2-phosphoglycerate. E203 functions as the Proton donor in the catalytic mechanism. Mg(2+) contacts are provided by D240, E283, and D310. Residues K335, R364, S365, and K386 each coordinate (2R)-2-phosphoglycerate. The active-site Proton acceptor is K335.

This sequence belongs to the enolase family. Mg(2+) serves as cofactor.

It localises to the cytoplasm. The protein localises to the secreted. The protein resides in the cell surface. It catalyses the reaction (2R)-2-phosphoglycerate = phosphoenolpyruvate + H2O. It participates in carbohydrate degradation; glycolysis; pyruvate from D-glyceraldehyde 3-phosphate: step 4/5. Functionally, catalyzes the reversible conversion of 2-phosphoglycerate (2-PG) into phosphoenolpyruvate (PEP). It is essential for the degradation of carbohydrates via glycolysis. The polypeptide is Enolase (Deinococcus geothermalis (strain DSM 11300 / CIP 105573 / AG-3a)).